Here is a 165-residue protein sequence, read N- to C-terminus: 2-C-methyl-D-erythritol 2,4-cyclodiphosphate synthase (165 aa).

A divalent metal cation contacts are provided by D11 and H13. 4-CDP-2-C-methyl-D-erythritol 2-phosphate contacts are provided by residues 11–13 and 40–41; these read DVH and HS. H48 serves as a coordination point for a divalent metal cation. Residues 62 to 64, 67 to 71, 137 to 140, F144, and R147 contribute to the 4-CDP-2-C-methyl-D-erythritol 2-phosphate site; these read DIG, FPDTD, and TTSE.

This sequence belongs to the IspF family. In terms of assembly, homotrimer. A divalent metal cation serves as cofactor.

It catalyses the reaction 4-CDP-2-C-methyl-D-erythritol 2-phosphate = 2-C-methyl-D-erythritol 2,4-cyclic diphosphate + CMP. Its pathway is isoprenoid biosynthesis; isopentenyl diphosphate biosynthesis via DXP pathway; isopentenyl diphosphate from 1-deoxy-D-xylulose 5-phosphate: step 4/6. Its function is as follows. Involved in the biosynthesis of isopentenyl diphosphate (IPP) and dimethylallyl diphosphate (DMAPP), two major building blocks of isoprenoid compounds. Catalyzes the conversion of 4-diphosphocytidyl-2-C-methyl-D-erythritol 2-phosphate (CDP-ME2P) to 2-C-methyl-D-erythritol 2,4-cyclodiphosphate (ME-CPP) with a corresponding release of cytidine 5-monophosphate (CMP). The polypeptide is 2-C-methyl-D-erythritol 2,4-cyclodiphosphate synthase (Rubrobacter xylanophilus (strain DSM 9941 / JCM 11954 / NBRC 16129 / PRD-1)).